Consider the following 365-residue polypeptide: tRNA/tmRNA (uracil-C(5))-methyltransferase (365 aa).

S-adenosyl-L-methionine is bound by residues glutamine 189, tyrosine 217, asparagine 222, glutamate 238, and aspartate 298. Cysteine 323 acts as the Nucleophile in catalysis. Glutamate 357 functions as the Proton acceptor in the catalytic mechanism.

This sequence belongs to the class I-like SAM-binding methyltransferase superfamily. RNA M5U methyltransferase family. TrmA subfamily.

The catalysed reaction is uridine(54) in tRNA + S-adenosyl-L-methionine = 5-methyluridine(54) in tRNA + S-adenosyl-L-homocysteine + H(+). It catalyses the reaction uridine(341) in tmRNA + S-adenosyl-L-methionine = 5-methyluridine(341) in tmRNA + S-adenosyl-L-homocysteine + H(+). Dual-specificity methyltransferase that catalyzes the formation of 5-methyluridine at position 54 (m5U54) in all tRNAs, and that of position 341 (m5U341) in tmRNA (transfer-mRNA). In Shewanella denitrificans (strain OS217 / ATCC BAA-1090 / DSM 15013), this protein is tRNA/tmRNA (uracil-C(5))-methyltransferase.